The sequence spans 24 residues: DEAVVHDSYAFDKNQLIPVGARAE.

The protein resides in the cell outer membrane. Its function is as follows. May be involved in transporting molecules across the outer membrane. The protein is 29 kDa outer membrane protein of Acinetobacter baumannii.